The primary structure comprises 149 residues: Transcriptional repressor NrdR (149 aa).

A zinc finger spans residues 3–34 (CPFCTAEETKVIDSRLAADGYQIRRRRECIGC). An ATP-cone domain is found at 49-139 (PYIIKNNGNR…VYLSFDDIEE (91 aa)).

It belongs to the NrdR family. Zn(2+) serves as cofactor.

Negatively regulates transcription of bacterial ribonucleotide reductase nrd genes and operons by binding to NrdR-boxes. This Haemophilus ducreyi (strain 35000HP / ATCC 700724) protein is Transcriptional repressor NrdR.